A 1413-amino-acid polypeptide reads, in one-letter code: DNA-directed RNA polymerase subunit beta' (1413 aa).

Zn(2+)-binding residues include cysteine 70, cysteine 72, cysteine 85, and cysteine 88. Mg(2+) is bound by residues aspartate 460, aspartate 462, and aspartate 464. Positions 814, 888, 895, and 898 each coordinate Zn(2+).

This sequence belongs to the RNA polymerase beta' chain family. The RNAP catalytic core consists of 2 alpha, 1 beta, 1 beta' and 1 omega subunit. When a sigma factor is associated with the core the holoenzyme is formed, which can initiate transcription. Requires Mg(2+) as cofactor. Zn(2+) is required as a cofactor.

It catalyses the reaction RNA(n) + a ribonucleoside 5'-triphosphate = RNA(n+1) + diphosphate. DNA-dependent RNA polymerase catalyzes the transcription of DNA into RNA using the four ribonucleoside triphosphates as substrates. The sequence is that of DNA-directed RNA polymerase subunit beta' from Buchnera aphidicola subsp. Schizaphis graminum (strain Sg).